Consider the following 284-residue polypeptide: Prolyl 4-hydroxylase subunit alpha (284 aa).

Residues 169–284 form the Fe2OG dioxygenase domain; that stretch reads NFNSIKTQTQ…PRIAITTWIY (116 aa). Residues His191, Asp193, and His266 each contribute to the Fe cation site. Arg276 is a binding site for 2-oxoglutarate.

The protein belongs to the P4HA family. As to quaternary structure, heterotetramer of two alpha-1 chains and two beta chains (the beta chain is the multi-functional PDI). Fe(2+) serves as cofactor. L-ascorbate is required as a cofactor.

The protein resides in the cytoplasm. The enzyme catalyses L-prolyl-[Skp1 protein] + 2-oxoglutarate + O2 = trans-4-hydroxy-L-prolyl-[Skp1 protein] + succinate + CO2. With respect to regulation, inhibited by the prolyl-hydroxylase inhibitors alpha,alpha'-dipyridyl and ethyl 3,4-dihydroxybenzoate. In terms of biological role, catalyzes the post-translational formation of 4-hydroxyproline. Probably hydroxylates skp1 on Pro-143. The chain is Prolyl 4-hydroxylase subunit alpha (phyA) from Dictyostelium discoideum (Social amoeba).